The chain runs to 108 residues: MPVNVDRLKDAVEVLGNRVRIRVYVKPEGRERRLRLEEGELVFYTDEPPLEGRANASLINFLARGLKVSVKNIEIVHGARSRSKVVEIRDVADPDALLERLASIVDEG.

It belongs to the UPF0235 family.

The protein is UPF0235 protein APE_0182.1 of Aeropyrum pernix (strain ATCC 700893 / DSM 11879 / JCM 9820 / NBRC 100138 / K1).